The chain runs to 378 residues: Erythronate-4-phosphate dehydrogenase (378 aa).

Positions 45 and 66 each coordinate substrate. NAD(+) is bound by residues Asp146 and Thr175. The active site involves Arg208. Position 232 (Asp232) interacts with NAD(+). The active site involves Glu237. The active-site Proton donor is the His254. Position 257 (Gly257) interacts with NAD(+). Tyr258 serves as a coordination point for substrate.

Belongs to the D-isomer specific 2-hydroxyacid dehydrogenase family. PdxB subfamily. In terms of assembly, homodimer.

The protein resides in the cytoplasm. The enzyme catalyses 4-phospho-D-erythronate + NAD(+) = (R)-3-hydroxy-2-oxo-4-phosphooxybutanoate + NADH + H(+). The protein operates within cofactor biosynthesis; pyridoxine 5'-phosphate biosynthesis; pyridoxine 5'-phosphate from D-erythrose 4-phosphate: step 2/5. Catalyzes the oxidation of erythronate-4-phosphate to 3-hydroxy-2-oxo-4-phosphonooxybutanoate. This Salmonella paratyphi A (strain ATCC 9150 / SARB42) protein is Erythronate-4-phosphate dehydrogenase.